We begin with the raw amino-acid sequence, 266 residues long: tRNA pseudouridine synthase A (266 aa).

Residue D57 is the Nucleophile of the active site. A substrate-binding site is contributed by Y115.

Belongs to the tRNA pseudouridine synthase TruA family. In terms of assembly, homodimer.

It carries out the reaction uridine(38/39/40) in tRNA = pseudouridine(38/39/40) in tRNA. Functionally, formation of pseudouridine at positions 38, 39 and 40 in the anticodon stem and loop of transfer RNAs. This Buchnera aphidicola subsp. Acyrthosiphon pisum (strain Tuc7) protein is tRNA pseudouridine synthase A.